Reading from the N-terminus, the 177-residue chain is ATP-dependent protease subunit HslV (177 aa).

Residue threonine 5 is part of the active site. Glycine 161, cysteine 164, and threonine 167 together coordinate Na(+).

It belongs to the peptidase T1B family. HslV subfamily. In terms of assembly, a double ring-shaped homohexamer of HslV is capped on each side by a ring-shaped HslU homohexamer. The assembly of the HslU/HslV complex is dependent on binding of ATP.

It is found in the cytoplasm. The catalysed reaction is ATP-dependent cleavage of peptide bonds with broad specificity.. Allosterically activated by HslU binding. Its function is as follows. Protease subunit of a proteasome-like degradation complex believed to be a general protein degrading machinery. The polypeptide is ATP-dependent protease subunit HslV (Campylobacter concisus (strain 13826)).